Here is a 211-residue protein sequence, read N- to C-terminus: Large ribosomal subunit protein uL3 (211 aa).

This sequence belongs to the universal ribosomal protein uL3 family. In terms of assembly, part of the 50S ribosomal subunit. Forms a cluster with proteins L14 and L19.

In terms of biological role, one of the primary rRNA binding proteins, it binds directly near the 3'-end of the 23S rRNA, where it nucleates assembly of the 50S subunit. The sequence is that of Large ribosomal subunit protein uL3 from Geotalea daltonii (strain DSM 22248 / JCM 15807 / FRC-32) (Geobacter daltonii).